Consider the following 1391-residue polypeptide: DNA-directed RNA polymerase subunit beta (1391 aa).

It belongs to the RNA polymerase beta chain family. The RNAP catalytic core consists of 2 alpha, 1 beta, 1 beta' and 1 omega subunit. When a sigma factor is associated with the core the holoenzyme is formed, which can initiate transcription.

It catalyses the reaction RNA(n) + a ribonucleoside 5'-triphosphate = RNA(n+1) + diphosphate. In terms of biological role, DNA-dependent RNA polymerase catalyzes the transcription of DNA into RNA using the four ribonucleoside triphosphates as substrates. This is DNA-directed RNA polymerase subunit beta from Mycoplasma pneumoniae (strain ATCC 29342 / M129 / Subtype 1) (Mycoplasmoides pneumoniae).